We begin with the raw amino-acid sequence, 105 residues long: ESAT-6-like protein EsxU (105 aa).

It belongs to the WXG100 family. CFP-10 subfamily. As to quaternary structure, forms a tight 1:1 complex with EsxT. Complex formation results in induction of alpha-helical conformation and stability against chemical denaturation.

The protein localises to the secreted. This Mycobacterium tuberculosis (strain ATCC 25618 / H37Rv) protein is ESAT-6-like protein EsxU.